Here is a 487-residue protein sequence, read N- to C-terminus: Ribosome biogenesis protein YTM1 (487 aa).

Positions 13 to 95 (VKVTFTTNEA…ETNLTLQYVR (83 aa)) are ubiquitin-like (UBL) domain. 5 WD repeats span residues 122–161 (SPAG…LVTA), 168–206 (GHSA…ASGQ), 217–256 (GHRA…SPEA), 379–419 (GHTN…PASG), and 451–487 (GEGA…VVRE). The interval 253-277 (SPEADASLLPNAHTSKRRKVASSVT) is disordered.

This sequence belongs to the WD repeat WDR12/YTM1 family. Component of the NOP7 complex, composed of ERB1, NOP7 and YTM1. The complex is held together by ERB1, which interacts with NOP7 via its N-terminal domain and with YTM1 via a high-affinity interaction between the seven-bladed beta-propeller domains of the 2 proteins. The NOP7 complex associates with the 66S pre-ribosome. Interacts (via UBL domain) with MDN1 (via VWFA/MIDAS domain).

It is found in the nucleus. Its subcellular location is the nucleolus. It localises to the nucleoplasm. Functionally, component of the NOP7 complex, which is required for maturation of the 25S and 5.8S ribosomal RNAs and formation of the 60S ribosome. This chain is Ribosome biogenesis protein YTM1, found in Podospora anserina (strain S / ATCC MYA-4624 / DSM 980 / FGSC 10383) (Pleurage anserina).